A 377-amino-acid polypeptide reads, in one-letter code: Chaperone protein DnaJ (377 aa).

The J domain occupies 5–70; that stretch reads DYYQVLGVSR…KKRSAYDQLG (66 aa). Residues 138–216 form a CR-type zinc finger; sequence GVTKIISFKT…CYGEGRYINT (79 aa). The Zn(2+) site is built by C151, C154, C168, C171, C190, C193, C204, and C207. CXXCXGXG motif repeat units follow at residues 151–158, 168–175, 190–197, and 204–211; these read CDACAGKG, CPTCRGSG, CQTCRGAG, and CTKCYGEG.

This sequence belongs to the DnaJ family. As to quaternary structure, homodimer. Zn(2+) is required as a cofactor.

The protein resides in the cytoplasm. Its function is as follows. Participates actively in the response to hyperosmotic and heat shock by preventing the aggregation of stress-denatured proteins and by disaggregating proteins, also in an autonomous, DnaK-independent fashion. Unfolded proteins bind initially to DnaJ; upon interaction with the DnaJ-bound protein, DnaK hydrolyzes its bound ATP, resulting in the formation of a stable complex. GrpE releases ADP from DnaK; ATP binding to DnaK triggers the release of the substrate protein, thus completing the reaction cycle. Several rounds of ATP-dependent interactions between DnaJ, DnaK and GrpE are required for fully efficient folding. Also involved, together with DnaK and GrpE, in the DNA replication of plasmids through activation of initiation proteins. The sequence is that of Chaperone protein DnaJ from Orientia tsutsugamushi (strain Boryong) (Rickettsia tsutsugamushi).